A 236-amino-acid polypeptide reads, in one-letter code: DCN1-like protein 5 (236 aa).

Ser-9, Ser-40, and Ser-47 each carry phosphoserine. The DCUN1 domain occupies 45–231 (FSSKKCLAWF…LLDEFVEWHK (187 aa)).

As to quaternary structure, part of a complex that contains DCUN1D5, CUL1 and RBX1; this interaction is bridged by CUL1. Interacts (via the DCUN1 domain) with the unneddylated cullins: interacts with CUL1, CUL2, CUL3, CUL4A, CUL4B and CUL5; these interactions promote the cullin neddylation and the identity of the cullin dictates the affinity of the interaction. Interacts (via DCUN1 domain) with UBE2M (N-terminally acetylated form) and probably with UBE2F (N-terminally acetylated form). May also interact with regulators or subunits of cullin-RING ligases such as RBX1, RNF7, ELOB and DDB1; these interactions are bridged by cullins. Interacts with CAND1; this interaction is bridged by cullins and strongly inhibits the neddylation of cullins. These CAND-cullin-DCNL complexes can only be neddylated in the presence of a substrate adapter. In terms of processing, phosphorylation at Ser-40 is independent of cullin's interaction. Phosphorylated in response to both TICAM1 and MYD88 dependent Toll-like receptor (TLR) pathway activation. Phosphorylated in response to IL1B stimulation.

Its subcellular location is the nucleus. It is found in the cytoplasm. It localises to the cytoskeleton. The protein localises to the spindle. Its function is as follows. Contributes to the neddylation of all cullins by transferring NEDD8 from N-terminally acetylated NEDD8-conjugating E2s enzyme to different cullin C-terminal domain-RBX complexes which is necessary for the activation of cullin-RING E3 ubiquitin ligases (CRLs). May play a role in DNA damage response and may participate in cell proliferation and anchorage-independent cell growth. The chain is DCN1-like protein 5 (DCUN1D5) from Bos taurus (Bovine).